The primary structure comprises 130 residues: Tripartite terminase subunit 2 (130 aa).

The protein belongs to the herpesviridae TRM2 protein family. In terms of assembly, associates with TRM1 and TRM3 to form the tripartite terminase complex.

Its subcellular location is the host nucleus. Its function is as follows. Component of the molecular motor that translocates viral genomic DNA in empty capsid during DNA packaging. Forms a tripartite terminase complex together with TRM1 and TRM3 in the host cytoplasm. Once the complex reaches the host nucleus, it interacts with the capsid portal vertex. This portal forms a ring in which genomic DNA is translocated into the capsid. The polypeptide is Tripartite terminase subunit 2 (Homo sapiens (Human)).